Consider the following 490-residue polypeptide: Protein nucleotidyltransferase YdiU (490 aa).

8 residues coordinate ATP: Gly89, Gly91, Arg92, Lys112, Asp124, Gly125, Arg175, and Arg182. Asp251 serves as the catalytic Proton acceptor. Asn252 and Asp261 together coordinate Mg(2+). Asp261 provides a ligand contact to ATP.

It belongs to the SELO family. The cofactor is Mg(2+). Mn(2+) is required as a cofactor.

The enzyme catalyses L-seryl-[protein] + ATP = 3-O-(5'-adenylyl)-L-seryl-[protein] + diphosphate. It catalyses the reaction L-threonyl-[protein] + ATP = 3-O-(5'-adenylyl)-L-threonyl-[protein] + diphosphate. The catalysed reaction is L-tyrosyl-[protein] + ATP = O-(5'-adenylyl)-L-tyrosyl-[protein] + diphosphate. It carries out the reaction L-histidyl-[protein] + UTP = N(tele)-(5'-uridylyl)-L-histidyl-[protein] + diphosphate. The enzyme catalyses L-seryl-[protein] + UTP = O-(5'-uridylyl)-L-seryl-[protein] + diphosphate. It catalyses the reaction L-tyrosyl-[protein] + UTP = O-(5'-uridylyl)-L-tyrosyl-[protein] + diphosphate. Its function is as follows. Nucleotidyltransferase involved in the post-translational modification of proteins. It can catalyze the addition of adenosine monophosphate (AMP) or uridine monophosphate (UMP) to a protein, resulting in modifications known as AMPylation and UMPylation. The sequence is that of Protein nucleotidyltransferase YdiU from Vibrio vulnificus (strain YJ016).